The chain runs to 114 residues: Kininogen-2 (114 aa).

The N-terminal stretch at 1-23 is a signal peptide; the sequence is MRLWFCLSFFIVLCLEHFPGTLA. Residues 35-45 are compositionally biased toward basic residues; the sequence is TRLHGHHKPSR. The disordered stretch occupies residues 35–114; sequence TRLHGHHKPS…QIPGLGPLRG (80 aa). A compositionally biased stretch (basic and acidic residues) spans 65 to 80; that stretch reads PESEEKTEQFLRDLPK. At arginine 113 the chain carries Arginine amide.

This sequence belongs to the bradykinin-related peptide family. Expressed by the skin glands.

Its subcellular location is the secreted. Functionally, potent vasodilator. Binds B1 (BDKRB1) and B2 (BDKRB2) bradykinin receptors. The polypeptide is Kininogen-2 (Bombina maxima (Giant fire-bellied toad)).